Reading from the N-terminus, the 332-residue chain is Phosphate acyltransferase (332 aa).

Belongs to the PlsX family. As to quaternary structure, homodimer. Probably interacts with PlsY.

The protein localises to the cytoplasm. The enzyme catalyses a fatty acyl-[ACP] + phosphate = an acyl phosphate + holo-[ACP]. It functions in the pathway lipid metabolism; phospholipid metabolism. Functionally, catalyzes the reversible formation of acyl-phosphate (acyl-PO(4)) from acyl-[acyl-carrier-protein] (acyl-ACP). This enzyme utilizes acyl-ACP as fatty acyl donor, but not acyl-CoA. The protein is Phosphate acyltransferase of Oceanobacillus iheyensis (strain DSM 14371 / CIP 107618 / JCM 11309 / KCTC 3954 / HTE831).